The primary structure comprises 341 residues: Basic membrane protein B (341 aa).

The signal sequence occupies residues 1-14 (MRIVIFILGILLTS). Cysteine 15 carries the N-palmitoyl cysteine lipid modification. The S-diacylglycerol cysteine moiety is linked to residue cysteine 15.

The protein belongs to the BMP lipoprotein family. In terms of assembly, monomer.

It localises to the cell inner membrane. In terms of biological role, may be part of an ABC-type nucleoside uptake system involved in the purine salvage pathway. The chain is Basic membrane protein B (bmpB) from Borrelia garinii subsp. bavariensis (strain ATCC BAA-2496 / DSM 23469 / PBi) (Borreliella bavariensis).